The following is a 288-amino-acid chain: Protoheme IX farnesyltransferase (288 aa).

Transmembrane regions (helical) follow at residues 6–26, 44–64, 89–109, 111–131, 138–158, 169–189, 213–233, 238–258, and 268–288; these read VILY…LLSL, FLDS…NNVI, LAIL…VKFI, VVCF…YSFF, ISTI…YCSV, LLIM…ILHF, IILH…INSI, LIIS…ELTI, and IFRW…FGFV.

Belongs to the UbiA prenyltransferase family. Protoheme IX farnesyltransferase subfamily.

It is found in the cell membrane. The catalysed reaction is heme b + (2E,6E)-farnesyl diphosphate + H2O = Fe(II)-heme o + diphosphate. The protein operates within porphyrin-containing compound metabolism; heme O biosynthesis; heme O from protoheme: step 1/1. Converts heme B (protoheme IX) to heme O by substitution of the vinyl group on carbon 2 of heme B porphyrin ring with a hydroxyethyl farnesyl side group. The chain is Protoheme IX farnesyltransferase from Buchnera aphidicola subsp. Baizongia pistaciae (strain Bp).